Here is a 639-residue protein sequence, read N- to C-terminus: Wall-associated receptor kinase-like 15 (639 aa).

A signal peptide spans 1 to 25 (MELPWLSLTTFTLSLLIYFSSTTQA). Over 26–282 (FKRCPNCGST…KRKSCKRWSN (257 aa)) the chain is Extracellular. N-linked (GlcNAc...) asparagine glycosylation is found at Asn-68, Asn-115, Asn-126, Asn-141, and Asn-241. A helical membrane pass occupies residues 283-303 (LPLLGGLAGGVGAILIAGFIT). Topologically, residues 304–639 (KTIVSKQNRR…KEIENILHGI (336 aa)) are cytoplasmic. A Protein kinase domain is found at 354–639 (FAKSNLLGFG…KEIENILHGI (286 aa)). Residues 360–368 (LGFGGFGEV) and Lys-382 contribute to the ATP site. Asp-484 acts as the Proton acceptor in catalysis.

It belongs to the protein kinase superfamily. Ser/Thr protein kinase family.

It is found in the membrane. It carries out the reaction L-seryl-[protein] + ATP = O-phospho-L-seryl-[protein] + ADP + H(+). The catalysed reaction is L-threonyl-[protein] + ATP = O-phospho-L-threonyl-[protein] + ADP + H(+). In terms of biological role, putative serine/threonine-protein kinase that may function as a signaling receptor of extracellular matrix component. The sequence is that of Wall-associated receptor kinase-like 15 (WAKL15) from Arabidopsis thaliana (Mouse-ear cress).